The chain runs to 417 residues: Serine hydroxymethyltransferase (417 aa).

Residues L121 and G125 to L127 each bind (6S)-5,6,7,8-tetrahydrofolate. At K230 the chain carries N6-(pyridoxal phosphate)lysine. Position 355-357 (S355–F357) interacts with (6S)-5,6,7,8-tetrahydrofolate.

This sequence belongs to the SHMT family. As to quaternary structure, homodimer. Pyridoxal 5'-phosphate is required as a cofactor.

The protein resides in the cytoplasm. The catalysed reaction is (6R)-5,10-methylene-5,6,7,8-tetrahydrofolate + glycine + H2O = (6S)-5,6,7,8-tetrahydrofolate + L-serine. It functions in the pathway one-carbon metabolism; tetrahydrofolate interconversion. Its pathway is amino-acid biosynthesis; glycine biosynthesis; glycine from L-serine: step 1/1. Its function is as follows. Catalyzes the reversible interconversion of serine and glycine with tetrahydrofolate (THF) serving as the one-carbon carrier. This reaction serves as the major source of one-carbon groups required for the biosynthesis of purines, thymidylate, methionine, and other important biomolecules. Also exhibits THF-independent aldolase activity toward beta-hydroxyamino acids, producing glycine and aldehydes, via a retro-aldol mechanism. The sequence is that of Serine hydroxymethyltransferase from Marinobacter nauticus (strain ATCC 700491 / DSM 11845 / VT8) (Marinobacter aquaeolei).